We begin with the raw amino-acid sequence, 4814 residues long: Nonribosomal peptide synthetase SIDC (4814 aa).

Residues 21–453 (PGPTLLHQLV…MKTSGCHGAA (433 aa)) form an adenylation 1 region. The region spanning 528 to 601 (DLKKSTEPEL…HLVSSIKIID (74 aa)) is the Carrier 1 domain. The residue at position 562 (serine 562) is an O-(pantetheine 4'-phosphoryl)serine. Residues 637 to 1045 (VQDIIPCTNL…SLLESMRSME (409 aa)) are condensation 1. Residues 1101–1488 (TYTDLNRNAN…SRVSSATAAV (388 aa)) are adenylation 2. 2 Carrier domains span residues 1589–1666 (EDWN…HSSH) and 2134–2210 (SSWT…FENG). Residues serine 1626 and serine 2171 each carry the O-(pantetheine 4'-phosphoryl)serine modification. Condensation regions lie at residues 1706-2210 (LQEA…FENG) and 2243-2649 (LPCT…HQHD). Positions 2709-3100 (TFAQLNSIGN…IRSVKNIHDV (392 aa)) are adenylation 3. Positions 3203–3280 (SKDSAGYQKL…DLAVALSTAS (78 aa)) constitute a Carrier 4 domain. Serine 3240 is modified (O-(pantetheine 4'-phosphoryl)serine). A condensation 4 region spans residues 3319 to 3732 (YIYPCSPLQQ…VQVETALVDA (414 aa)). The region spanning 3747 to 3823 (EVWGPAADVL…YLSSLVMRLT (77 aa)) is the Carrier 5 domain. Serine 3784 bears the O-(pantetheine 4'-phosphoryl)serine mark. The condensation 5 stretch occupies residues 3857–4258 (DILPTTPLQD…YVLRHAEEDV (402 aa)). The region spanning 4295-4368 (NATSLAIRKV…HMAEQVAALG (74 aa)) is the Carrier 6 domain. Serine 4329 bears the O-(pantetheine 4'-phosphoryl)serine mark. The condensation 6 stretch occupies residues 4504-4686 (ETLLRLRIHH…HEDMQKITAD (183 aa)).

This sequence belongs to the NRP synthetase family. The cofactor is pantetheine 4'-phosphate.

It functions in the pathway siderophore biosynthesis. Functionally, nonribosomal peptide synthetase; part of the gene cluster that mediates the biosynthesis of at least 11 siderophores, including beauverichelin A, dimerumic acid (DA), Na-dimethyl coprogen (NADC), eleutherazine B, ferricrocin (FC), fusarinine A, fusarinine C (FsC), metachelin A, mevalonolactone, rhodotorulic acid (RA) and tenellin. This cocktail of siderophores for iron metabolism is essential for virulence, and more specifically for the fungal virulence in penetrating through the host cuticle. Siderophore synthesis is also involved in conidial germination under iron-deficient conditions. SIDC catalyzes the assembly of ferricrocin whereas SIDD catalyzes the assembly of fusarinine C. The protein is Nonribosomal peptide synthetase SIDC of Beauveria bassiana (strain ARSEF 2860) (White muscardine disease fungus).